We begin with the raw amino-acid sequence, 1001 residues long: Transcription-repair-coupling factor (1001 aa).

Residues 499 to 658 (DLSSHRVMDR…LSQIKGISSL (160 aa)) enclose the Helicase ATP-binding domain. 512 to 519 (GDVGFGKT) serves as a coordination point for ATP. Residues 611-614 (DEEH) carry the DEEH box motif. Positions 679–835 (LLKEIIYREL…SIAYHDLEIR (157 aa)) constitute a Helicase C-terminal domain.

The protein in the N-terminal section; belongs to the UvrB family. In the C-terminal section; belongs to the helicase family. RecG subfamily.

The protein localises to the cytoplasm. Its function is as follows. Couples transcription and DNA repair by recognizing RNA polymerase (RNAP) stalled at DNA lesions. Mediates ATP-dependent release of RNAP and its truncated transcript from the DNA, and recruitment of nucleotide excision repair machinery to the damaged site. This Helicobacter pylori (strain J99 / ATCC 700824) (Campylobacter pylori J99) protein is Transcription-repair-coupling factor.